The primary structure comprises 187 residues: UPF0301 protein PMI0339 (187 aa).

This sequence belongs to the UPF0301 (AlgH) family.

The protein is UPF0301 protein PMI0339 of Proteus mirabilis (strain HI4320).